Reading from the N-terminus, the 349-residue chain is MKIKAVGAYSAKQPLEPMDITRREPGPNDVKIEIAYCGVCHSDLHQVRSEWAGTVYPCVPGHEIVGRVVAVGDQVEKYAPGDLVGVGCIVDSCKHCEECEDGLENYCDHMTGTYNSPTPDEPGHTLGGYSQQIVVHERYVLRIRHPQEQLAAVAPLLCAGITTYSPLRHWQAGPGKKVGVVGIGGLGHMGIKLAHAMGAHVVAFTTSEAKREAAKALGADEVVNSRNADEMAAHLKSFDFILNTVAAPHNLDDFTTLLKRDGTMTLVGAPATPHKSPEVFNLIMKRRAIAGSMIGGIPETQEMLDFCAEHGIVADIEMIRADQINEAYERMLRGDVKYRFVIDNRTLTD.

Residues Cys-40, His-62, Cys-93, Cys-96, Cys-99, Cys-107, and Cys-158 each coordinate Zn(2+).

The protein belongs to the zinc-containing alcohol dehydrogenase family. It depends on Zn(2+) as a cofactor.

The catalysed reaction is a primary alcohol + NADP(+) = an aldehyde + NADPH + H(+). Functionally, catalyzes the reduction of a wide range of aldehydes into their corresponding alcohols. Has a strong preference for NADPH over NADH as the electron donor. Cannot use a ketone as substrate. Is a major source of NADPH-dependent aldehyde reductase activity in E.coli. The in vivo functions of YahK has yet to be determined. This is Aldehyde reductase YahK (yahK) from Escherichia coli (strain K12).